We begin with the raw amino-acid sequence, 277 residues long: MARSDVLVSTDWAESNLKAPKTVFVEVDEDTSAYDTGHIEGAVKLDWKTDLQDPIRRDFVDAQQFSKLLSERGIANDDTVILYGGNNNWFAAYAYWYFKLYGHQDVKLLDGGRKKWELDARPLSAEKVERPQTSYTAKEPDNSIRAFRDEVIAAIGTKNLVDVRSPDEFSGKILAPAHLPQEQSQRPGHIPGAINVPWSKAANEDGTFKSDEELAKLYAEAGLDGEKETIAYCRIGERSSHTWFVLQELLGHKNVKNYDGSWTEYGSLVGAPIELGS.

2 consecutive Rhodanese domains span residues 18–125 (KAPK…PLSA) and 154–274 (AIGT…APIE). K67 is covalently cross-linked (Isoglutamyl lysine isopeptide (Lys-Gln) (interchain with Q-Cter in protein Pup)). C233 (cysteine persulfide intermediate) is an active-site residue. A substrate-binding site is contributed by R238.

It catalyses the reaction thiosulfate + hydrogen cyanide = thiocyanate + sulfite + 2 H(+). Its function is as follows. May be a sulfotransferase involved in the formation of thiosulfate. This is Putative thiosulfate sulfurtransferase from Mycolicibacterium smegmatis (strain ATCC 700084 / mc(2)155) (Mycobacterium smegmatis).